Consider the following 191-residue polypeptide: Adenylate kinase (191 aa).

Position 10–15 (10–15) interacts with ATP; the sequence is GAGKGT. Positions 30–59 are NMP; the sequence is STGDMLRAARTSGTEMGNLVAGVMDRGELV. AMP is bound by residues T31, R36, 57-59, 83-86, and Q90; these read ELV and GFPR. The tract at residues 124 to 140 is LID; sequence NRAKEAAAAGQPVRADD. Residue R125 coordinates ATP. Residues R137 and R148 each contribute to the AMP site. G176 provides a ligand contact to ATP.

This sequence belongs to the adenylate kinase family. In terms of assembly, monomer.

The protein localises to the cytoplasm. It catalyses the reaction AMP + ATP = 2 ADP. The protein operates within purine metabolism; AMP biosynthesis via salvage pathway; AMP from ADP: step 1/1. In terms of biological role, catalyzes the reversible transfer of the terminal phosphate group between ATP and AMP. Plays an important role in cellular energy homeostasis and in adenine nucleotide metabolism. This is Adenylate kinase from Jannaschia sp. (strain CCS1).